Consider the following 170-residue polypeptide: Large ribosomal subunit protein uL15 (170 aa).

A compositionally biased stretch (basic and acidic residues) spans 1 to 12 (MKLHDLRPAEGS). Positions 1–50 (MKLHDLRPAEGSHRKRKRIGRGHGSGKVKTGGKGMMGQKARSGPGPYRTF) are disordered. Over residues 13-26 (HRKRKRIGRGHGSG) the composition is skewed to basic residues.

Belongs to the universal ribosomal protein uL15 family. In terms of assembly, part of the 50S ribosomal subunit.

Functionally, binds to the 23S rRNA. The sequence is that of Large ribosomal subunit protein uL15 from Chloroflexus aggregans (strain MD-66 / DSM 9485).